The chain runs to 91 residues: Early E3B 10.4 kDa protein (91 aa).

Positions 1 to 22 (MIPRNFFFTILICAFNVCATFT) are cleaved as a signal peptide. At 23-34 (AVATASPDCIGP) the chain is on the lumenal side. Residues 35-60 (FASYALFAFVTCICVCSIVCLVINFF) traverse the membrane as a helical segment. The Cytoplasmic portion of the chain corresponds to 61 to 91 (QLVDWIFVRIAYLRHHPEYRNQNVAALLRLI).

It belongs to the adenoviridae E3B family.

It localises to the host endoplasmic reticulum membrane. In terms of biological role, down-regulates the EGF receptor. The chain is Early E3B 10.4 kDa protein from Homo sapiens (Human).